Here is a 504-residue protein sequence, read N- to C-terminus: D-alanine--D-alanyl carrier protein ligase (504 aa).

ATP is bound at residue 152–153 (TS). Residue Asp-197 coordinates D-alanine. 292 to 297 (NTYGPT) contacts ATP. Val-301 lines the D-alanine pocket. ATP contacts are provided by residues Asp-383, 394–397 (YNGR), and Lys-492. Residue Lys-492 participates in D-alanine binding.

The protein belongs to the ATP-dependent AMP-binding enzyme family. DltA subfamily.

It is found in the cytoplasm. It carries out the reaction holo-[D-alanyl-carrier protein] + D-alanine + ATP = D-alanyl-[D-alanyl-carrier protein] + AMP + diphosphate. It participates in cell wall biogenesis; lipoteichoic acid biosynthesis. In terms of biological role, catalyzes the first step in the D-alanylation of lipoteichoic acid (LTA), the activation of D-alanine and its transfer onto the D-alanyl carrier protein (Dcp) DltC. In an ATP-dependent two-step reaction, forms a high energy D-alanyl-AMP intermediate, followed by transfer of the D-alanyl residue as a thiol ester to the phosphopantheinyl prosthetic group of the Dcp. D-alanylation of LTA plays an important role in modulating the properties of the cell wall in Gram-positive bacteria, influencing the net charge of the cell wall. The polypeptide is D-alanine--D-alanyl carrier protein ligase (Bacillus cereus (strain AH187)).